The primary structure comprises 377 residues: Anhydro-N-acetylmuramic acid kinase (377 aa).

14 to 21 lines the ATP pocket; that stretch reads GTSLDGVD.

The protein belongs to the anhydro-N-acetylmuramic acid kinase family.

It carries out the reaction 1,6-anhydro-N-acetyl-beta-muramate + ATP + H2O = N-acetyl-D-muramate 6-phosphate + ADP + H(+). It functions in the pathway amino-sugar metabolism; 1,6-anhydro-N-acetylmuramate degradation. It participates in cell wall biogenesis; peptidoglycan recycling. Catalyzes the specific phosphorylation of 1,6-anhydro-N-acetylmuramic acid (anhMurNAc) with the simultaneous cleavage of the 1,6-anhydro ring, generating MurNAc-6-P. Is required for the utilization of anhMurNAc either imported from the medium or derived from its own cell wall murein, and thus plays a role in cell wall recycling. This Pasteurella multocida (strain Pm70) protein is Anhydro-N-acetylmuramic acid kinase.